Reading from the N-terminus, the 890-residue chain is Bacteriocin BCN5 (890 aa).

2 SH3b domains span residues Pro22–Thr84 and Glu179–Thr241. Residues Gly303–Val549 enclose the Peptidase M14 domain. Residues His358, Glu361, and His475 each coordinate Zn(2+). The active-site Proton donor/acceptor is the Glu525. The SH3b 3 domain occupies Glu572–Lys636. The segment at Lys815–Val869 is hydrophobic.

It depends on Zn(2+) as a cofactor.

May function as an ionophore. This chain is Bacteriocin BCN5 (bcn), found in Clostridium perfringens.